Reading from the N-terminus, the 474-residue chain is Nitrogenase vanadium-iron protein alpha chain (474 aa).

[8Fe-7S] cluster-binding residues include Cys-49, Cys-75, and Cys-138. Residues Cys-257 and His-423 each contribute to the [7Fe-V-9S-C-homocitryl] cluster site.

It belongs to the NifD/NifK/NifE/NifN family. As to quaternary structure, hexamer of two alpha, two beta, and two delta chains. It depends on [8Fe-7S] cluster as a cofactor. [7Fe-V-9S-C-homocitryl] cluster is required as a cofactor.

The catalysed reaction is N2 + 8 reduced [2Fe-2S]-[ferredoxin] + 16 ATP + 16 H2O = H2 + 8 oxidized [2Fe-2S]-[ferredoxin] + 2 NH4(+) + 16 ADP + 16 phosphate + 6 H(+). In terms of biological role, this vanadium-iron protein is part of the nitrogenase complex that catalyzes the key enzymatic reactions in nitrogen fixation. This is Nitrogenase vanadium-iron protein alpha chain (vnfD) from Azotobacter vinelandii.